Reading from the N-terminus, the 452-residue chain is Bifunctional purine biosynthesis protein PurH (452 aa).

One can recognise an MGS-like domain in the interval Met1–Phe115.

Belongs to the PurH family.

The enzyme catalyses (6R)-10-formyltetrahydrofolate + 5-amino-1-(5-phospho-beta-D-ribosyl)imidazole-4-carboxamide = 5-formamido-1-(5-phospho-D-ribosyl)imidazole-4-carboxamide + (6S)-5,6,7,8-tetrahydrofolate. It catalyses the reaction IMP + H2O = 5-formamido-1-(5-phospho-D-ribosyl)imidazole-4-carboxamide. Its pathway is purine metabolism; IMP biosynthesis via de novo pathway; 5-formamido-1-(5-phospho-D-ribosyl)imidazole-4-carboxamide from 5-amino-1-(5-phospho-D-ribosyl)imidazole-4-carboxamide (10-formyl THF route): step 1/1. It participates in purine metabolism; IMP biosynthesis via de novo pathway; IMP from 5-formamido-1-(5-phospho-D-ribosyl)imidazole-4-carboxamide: step 1/1. In Thermotoga maritima (strain ATCC 43589 / DSM 3109 / JCM 10099 / NBRC 100826 / MSB8), this protein is Bifunctional purine biosynthesis protein PurH.